Reading from the N-terminus, the 158-residue chain is Transcription elongation factor GreA (158 aa).

Belongs to the GreA/GreB family.

Its function is as follows. Necessary for efficient RNA polymerase transcription elongation past template-encoded arresting sites. The arresting sites in DNA have the property of trapping a certain fraction of elongating RNA polymerases that pass through, resulting in locked ternary complexes. Cleavage of the nascent transcript by cleavage factors such as GreA or GreB allows the resumption of elongation from the new 3'terminus. GreA releases sequences of 2 to 3 nucleotides. This is Transcription elongation factor GreA from Pseudomonas syringae pv. tomato (strain ATCC BAA-871 / DC3000).